The chain runs to 250 residues: 2,5-dichloro-2,5-cyclohexadiene-1,4-diol dehydrogenase (250 aa).

9-34 (IIVTGGGSGIGRATVELLVASGANVA) provides a ligand contact to NAD(+). Residue Ser-141 participates in substrate binding. The Proton acceptor role is filled by Tyr-154.

Belongs to the short-chain dehydrogenases/reductases (SDR) family.

The catalysed reaction is 2,5-dichlorocyclohexa-2,5-dien-1,4-diol + NAD(+) = 2,5-dichlorohydroquinone + NADH + H(+). The protein operates within xenobiotic degradation; gamma-hexachlorocyclohexane degradation. Catalyzes the dehydrogenation of 2,5-dichloro-2,5-cyclohexadiene-1,4-diol (2,5-DDOL) to 2,5-dichlorohydroquinone (2,5-DCHQ), a step in the degradation of gamma-hexachlorocyclohexane (gamma-HCH or lindane). The polypeptide is 2,5-dichloro-2,5-cyclohexadiene-1,4-diol dehydrogenase (Sphingobium indicum (strain DSM 16412 / CCM 7286 / MTCC 6364 / B90A)).